Consider the following 245-residue polypeptide: Lactate utilization protein A 1 (245 aa).

The protein belongs to the LutA/YkgE family.

Is involved in L-lactate degradation and allows cells to grow with lactate as the sole carbon source. The protein is Lactate utilization protein A 1 of Bacillus mycoides (strain KBAB4) (Bacillus weihenstephanensis).